Consider the following 334-residue polypeptide: MNDSSVIYRAIVTSKFRTEKMLNFYNSIGSGPDKNTIFITFGRSEPWSSNENEVGFAPPYPTDSVLGVTDMWTHMMGTVKVLPSMLDAVIPRRDWGDTRYPDPYTFRINDIVVCNSAPYNATESGAGWLVYRCLDVPDTGMCSIASLTDKDECLKLGGKWTPSARSMTPPEGRGDAEGTIEPGDGYVWEYLFEIPPDVSINRCTNEYIVVPWPEELKEDPTRWGYEDNLTWQQDDFGLIYRVKANTIRFKAYLDSVYFPEAALPGNKGFRQISIITNPLEAKAHPNDPNVKAEKDYYDPEDLMRHSGEMIYMENRPPIIMAMDQTEEINILFTF.

Cys-142 and Cys-153 form a disulfide bridge.

It belongs to the tevenvirinae baseplate structural protein gp8 family. Homodimer. Interacts with gp7. Part of the baseplate macromolecular complex which consists of gp5, gp5.4, gp27 (central spike complex); gp6, gp25, gp53 (inner baseplate); gp7, gp8 (intermediate baseplate); gp9, gp10, gp11, gp12 (peripheral); gp48 and gp54 (proximal region of the tail tube).

It is found in the virion. Intermediate baseplate protein. Involved in the tail assembly. This chain is Baseplate wedge protein gp8 (8), found in Enterobacteria phage T4 (Bacteriophage T4).